A 208-amino-acid chain; its full sequence is Pyridoxine/pyridoxamine 5'-phosphate oxidase (208 aa).

FMN-binding positions include 53–58 (RTVLLK), 68–69 (YS), Lys75, and Gln100. Lys58 is a substrate binding site. Residues Tyr118, Arg122, and Ser126 each contribute to the substrate site. Residues 135–136 (QS) and Trp180 contribute to the FMN site. 186-188 (RLH) provides a ligand contact to substrate. Arg190 contacts FMN.

It belongs to the pyridoxamine 5'-phosphate oxidase family. As to quaternary structure, homodimer. Requires FMN as cofactor.

It carries out the reaction pyridoxamine 5'-phosphate + O2 + H2O = pyridoxal 5'-phosphate + H2O2 + NH4(+). It catalyses the reaction pyridoxine 5'-phosphate + O2 = pyridoxal 5'-phosphate + H2O2. It functions in the pathway cofactor metabolism; pyridoxal 5'-phosphate salvage; pyridoxal 5'-phosphate from pyridoxamine 5'-phosphate: step 1/1. It participates in cofactor metabolism; pyridoxal 5'-phosphate salvage; pyridoxal 5'-phosphate from pyridoxine 5'-phosphate: step 1/1. Functionally, catalyzes the oxidation of either pyridoxine 5'-phosphate (PNP) or pyridoxamine 5'-phosphate (PMP) into pyridoxal 5'-phosphate (PLP). The chain is Pyridoxine/pyridoxamine 5'-phosphate oxidase from Xylella fastidiosa (strain Temecula1 / ATCC 700964).